Consider the following 290-residue polypeptide: Endoplasmic reticulum-Golgi intermediate compartment protein 1 (290 aa).

At 1–26 (MPFDFRRFDIYRKVPKDLTQPTYTGA) the chain is on the cytoplasmic side. A helical membrane pass occupies residues 27-47 (IISICCCLFITFLFLSELTGF). Residues 48-254 (IANEIVNELY…RRQPMYRFIT (207 aa)) are Lumenal-facing. Asn-74 carries N-linked (GlcNAc...) asparagine glycosylation. A helical transmembrane segment spans residues 255 to 275 (TVCAIIGGTFTVAGILDSFIF). Residues 276 to 290 (TASEAWKKIQLGKMQ) are Cytoplasmic-facing.

Belongs to the ERGIC family.

It localises to the endoplasmic reticulum membrane. The protein localises to the endoplasmic reticulum-Golgi intermediate compartment membrane. Its subcellular location is the golgi apparatus membrane. Possible role in transport between endoplasmic reticulum and Golgi. In Xenopus laevis (African clawed frog), this protein is Endoplasmic reticulum-Golgi intermediate compartment protein 1 (ergic1).